Reading from the N-terminus, the 480-residue chain is Aspartyl/glutamyl-tRNA(Asn/Gln) amidotransferase subunit B (480 aa).

It belongs to the GatB/GatE family. GatB subfamily. Heterotrimer of A, B and C subunits.

The catalysed reaction is L-glutamyl-tRNA(Gln) + L-glutamine + ATP + H2O = L-glutaminyl-tRNA(Gln) + L-glutamate + ADP + phosphate + H(+). It catalyses the reaction L-aspartyl-tRNA(Asn) + L-glutamine + ATP + H2O = L-asparaginyl-tRNA(Asn) + L-glutamate + ADP + phosphate + 2 H(+). Its function is as follows. Allows the formation of correctly charged Asn-tRNA(Asn) or Gln-tRNA(Gln) through the transamidation of misacylated Asp-tRNA(Asn) or Glu-tRNA(Gln) in organisms which lack either or both of asparaginyl-tRNA or glutaminyl-tRNA synthetases. The reaction takes place in the presence of glutamine and ATP through an activated phospho-Asp-tRNA(Asn) or phospho-Glu-tRNA(Gln). The sequence is that of Aspartyl/glutamyl-tRNA(Asn/Gln) amidotransferase subunit B from Caldicellulosiruptor saccharolyticus (strain ATCC 43494 / DSM 8903 / Tp8T 6331).